A 507-amino-acid polypeptide reads, in one-letter code: ATP synthase subunit alpha, chloroplastic (507 aa).

170–177 (GDRQTGKT) contacts ATP.

This sequence belongs to the ATPase alpha/beta chains family. In terms of assembly, F-type ATPases have 2 components, CF(1) - the catalytic core - and CF(0) - the membrane proton channel. CF(1) has five subunits: alpha(3), beta(3), gamma(1), delta(1), epsilon(1). CF(0) has four main subunits: a, b, b' and c.

It is found in the plastid. It localises to the chloroplast thylakoid membrane. The enzyme catalyses ATP + H2O + 4 H(+)(in) = ADP + phosphate + 5 H(+)(out). Produces ATP from ADP in the presence of a proton gradient across the membrane. The alpha chain is a regulatory subunit. The sequence is that of ATP synthase subunit alpha, chloroplastic from Phalaenopsis aphrodite subsp. formosana (Moth orchid).